The primary structure comprises 704 residues: UvrABC system protein B (704 aa).

A Helicase ATP-binding domain is found at 35–188 (ERINNGEKDV…DDLLRKFVSM (154 aa)). Position 48-55 (48-55 (GATGTGKS)) interacts with ATP. The short motif at 101–124 (YYDYYQPEAYVAQTDTFIEKDSSI) is the Beta-hairpin element. One can recognise a Helicase C-terminal domain in the interval 438–604 (QIDDLLGEIR…PLRKKIADIT (167 aa)). A UVR domain is found at 659-694 (VGMIAQLTEQMHGAAAELQFEVAARIRDEVSELKKE).

The protein belongs to the UvrB family. As to quaternary structure, forms a heterotetramer with UvrA during the search for lesions. Interacts with UvrC in an incision complex.

The protein resides in the cytoplasm. Its function is as follows. The UvrABC repair system catalyzes the recognition and processing of DNA lesions. A damage recognition complex composed of 2 UvrA and 2 UvrB subunits scans DNA for abnormalities. Upon binding of the UvrA(2)B(2) complex to a putative damaged site, the DNA wraps around one UvrB monomer. DNA wrap is dependent on ATP binding by UvrB and probably causes local melting of the DNA helix, facilitating insertion of UvrB beta-hairpin between the DNA strands. Then UvrB probes one DNA strand for the presence of a lesion. If a lesion is found the UvrA subunits dissociate and the UvrB-DNA preincision complex is formed. This complex is subsequently bound by UvrC and the second UvrB is released. If no lesion is found, the DNA wraps around the other UvrB subunit that will check the other stand for damage. This Pseudarthrobacter chlorophenolicus (strain ATCC 700700 / DSM 12829 / CIP 107037 / JCM 12360 / KCTC 9906 / NCIMB 13794 / A6) (Arthrobacter chlorophenolicus) protein is UvrABC system protein B.